We begin with the raw amino-acid sequence, 280 residues long: Vitamin B12-binding protein (280 aa).

Positions 1-27 are cleaved as a signal peptide; it reads MMPLGLFPLPRAAAVLLISLLTLPAQA. One can recognise a Fe/B12 periplasmic-binding domain in the interval 30 to 277; that stretch reads RVISLSPSTT…QMASIPTPVA (248 aa). Tyrosine 57 serves as a coordination point for cyanocob(III)alamin. An intrachain disulfide couples cysteine 190 to cysteine 266.

The protein belongs to the BtuF family. The complex is composed of two ATP-binding proteins (BtuD), two transmembrane proteins (BtuC) and a solute-binding protein (BtuF).

The protein resides in the periplasm. Part of the ABC transporter complex BtuCDF involved in vitamin B12 import. Binds vitamin B12 and delivers it to the periplasmic surface of BtuC. This Yersinia pestis bv. Antiqua (strain Antiqua) protein is Vitamin B12-binding protein.